A 276-amino-acid polypeptide reads, in one-letter code: ATP synthase subunit delta (276 aa).

The protein belongs to the ATPase delta chain family. F-type ATPases have 2 components, F(1) - the catalytic core - and F(0) - the membrane proton channel. F(1) has five subunits: alpha(3), beta(3), gamma(1), delta(1), epsilon(1). F(0) has three main subunits: a(1), b(2) and c(10-14). The alpha and beta chains form an alternating ring which encloses part of the gamma chain. F(1) is attached to F(0) by a central stalk formed by the gamma and epsilon chains, while a peripheral stalk is formed by the delta and b chains.

The protein resides in the cell membrane. F(1)F(0) ATP synthase produces ATP from ADP in the presence of a proton or sodium gradient. F-type ATPases consist of two structural domains, F(1) containing the extramembraneous catalytic core and F(0) containing the membrane proton channel, linked together by a central stalk and a peripheral stalk. During catalysis, ATP synthesis in the catalytic domain of F(1) is coupled via a rotary mechanism of the central stalk subunits to proton translocation. Functionally, this protein is part of the stalk that links CF(0) to CF(1). It either transmits conformational changes from CF(0) to CF(1) or is implicated in proton conduction. The polypeptide is ATP synthase subunit delta (Kineococcus radiotolerans (strain ATCC BAA-149 / DSM 14245 / SRS30216)).